The sequence spans 480 residues: Cysteine--tRNA ligase (480 aa).

A Zn(2+)-binding site is contributed by Cys-29. Residues 31 to 41 (PTVYSDPHLGH) carry the 'HIGH' region motif. The Zn(2+) site is built by Cys-220, His-245, and Glu-249. The short motif at 276 to 280 (KMAKS) is the 'KMSKS' region element. Residue Lys-279 coordinates ATP.

The protein belongs to the class-I aminoacyl-tRNA synthetase family. In terms of assembly, monomer. Zn(2+) serves as cofactor.

Its subcellular location is the cytoplasm. The catalysed reaction is tRNA(Cys) + L-cysteine + ATP = L-cysteinyl-tRNA(Cys) + AMP + diphosphate. This is Cysteine--tRNA ligase from Thermus thermophilus (strain ATCC BAA-163 / DSM 7039 / HB27).